The chain runs to 349 residues: 4-hydroxythreonine-4-phosphate dehydrogenase (349 aa).

Threonine 136 is a substrate binding site. A divalent metal cation is bound by residues histidine 171, histidine 216, and histidine 281. The substrate site is built by lysine 289, asparagine 298, and arginine 307.

This sequence belongs to the PdxA family. As to quaternary structure, homodimer. A divalent metal cation serves as cofactor.

It localises to the cytoplasm. The catalysed reaction is 4-(phosphooxy)-L-threonine + NAD(+) = 3-amino-2-oxopropyl phosphate + CO2 + NADH. The protein operates within cofactor biosynthesis; pyridoxine 5'-phosphate biosynthesis; pyridoxine 5'-phosphate from D-erythrose 4-phosphate: step 4/5. In terms of biological role, catalyzes the NAD(P)-dependent oxidation of 4-(phosphooxy)-L-threonine (HTP) into 2-amino-3-oxo-4-(phosphooxy)butyric acid which spontaneously decarboxylates to form 3-amino-2-oxopropyl phosphate (AHAP). The chain is 4-hydroxythreonine-4-phosphate dehydrogenase from Synechocystis sp. (strain ATCC 27184 / PCC 6803 / Kazusa).